We begin with the raw amino-acid sequence, 378 residues long: Zinc transporter 7 (378 aa).

Topologically, residues 1 to 37 (MLPLSIKDDEYKPPKFNLFGKISGWFRSILSDKTSRN) are cytoplasmic. The chain crosses the membrane as a helical span at residues 38 to 58 (LFFFLCLNLSFAFVELLYGIW). Over 59–67 (SNCLGLISD) the chain is Lumenal. A helical membrane pass occupies residues 68 to 88 (SFHMFFDSTAILAGLAASVIS). The Cytoplasmic portion of the chain corresponds to 89–102 (KWRDNDAFSYGYVR). Residues 103-123 (AEVLAGFVNGLFLIFTAFFIF) traverse the membrane as a helical segment. At 124 to 140 (SEGVERALAPPDVHHER) the chain is on the lumenal side. The helical transmembrane segment at 141–161 (LLLVSILGFVVNLVGIFVFNH) threads the bilayer. Residues 161–220 (HGGHGHSHGSGHGHSHSLFNGALDHSHGHEDHCHSHGAKHGGAHSHDHDHAHGHGHLHSH) are his-rich loop. Residues 162-238 (GGHGHSHGSG…AGPSRQILQG (77 aa)) are Cytoplasmic-facing. The tract at residues 186-228 (SHGHEDHCHSHGAKHGGAHSHDHDHAHGHGHLHSHDGPSFKET) is disordered. Residues 204–224 (HSHDHDHAHGHGHLHSHDGPS) show a composition bias toward basic and acidic residues. Residues 239–259 (VFLHILADTLGSIGVIASAIM) form a helical membrane-spanning segment. Over 260–264 (MQNFG) the chain is Lumenal. The chain crosses the membrane as a helical span at residues 265 to 285 (LMIADPICSILIAILIVVSVI). The Cytoplasmic segment spans residues 286–378 (PLLRESIGIL…LYVQIDFAAM (93 aa)).

Belongs to the cation diffusion facilitator (CDF) transporter (TC 2.A.4) family. SLC30A subfamily. In terms of assembly, homooligomer.

The protein localises to the golgi apparatus membrane. It localises to the cytoplasmic vesicle. It is found in the golgi apparatus. The protein resides in the trans-Golgi network. Its subcellular location is the sarcoplasmic reticulum. The protein localises to the mitochondrion. It carries out the reaction Zn(2+)(in) = Zn(2+)(out). In terms of biological role, zinc ion transporter mediating zinc entry from the cytosol into the lumen of organelles along the secretory pathway. By contributing to zinc ion homeostasis within the early secretory pathway, regulates the activation and folding of enzymes like alkaline phosphatases. The polypeptide is Zinc transporter 7 (Rattus norvegicus (Rat)).